We begin with the raw amino-acid sequence, 693 residues long: Elongation factor G (693 aa).

One can recognise a tr-type G domain in the interval 8–282; the sequence is EKTRNIGIMA…AVVDYLPSPL (275 aa). GTP is bound by residues 17-24, 81-85, and 135-138; these read AHVDAGKT, DTPGH, and NKMD.

This sequence belongs to the TRAFAC class translation factor GTPase superfamily. Classic translation factor GTPase family. EF-G/EF-2 subfamily.

Its subcellular location is the cytoplasm. Its function is as follows. Catalyzes the GTP-dependent ribosomal translocation step during translation elongation. During this step, the ribosome changes from the pre-translocational (PRE) to the post-translocational (POST) state as the newly formed A-site-bound peptidyl-tRNA and P-site-bound deacylated tRNA move to the P and E sites, respectively. Catalyzes the coordinated movement of the two tRNA molecules, the mRNA and conformational changes in the ribosome. The protein is Elongation factor G of Streptococcus mutans serotype c (strain ATCC 700610 / UA159).